A 706-amino-acid chain; its full sequence is Heat shock protein 75 kDa, mitochondrial (706 aa).

Residues 1-60 (MARELRALLLWGRGLQSALRAPALAGVRRGKPVLHLQKTTVHFRDPTQSLASGISAGQLY) constitute a mitochondrion transit peptide. Asparagine 121 and aspartate 160 together coordinate ATP. Serine 172 bears the Phosphoserine mark. Position 173 (asparagine 173) interacts with ATP. Residue threonine 176 is modified to Phosphothreonine. At serine 196 the chain carries Phosphoserine. Phenylalanine 207 contributes to the ATP binding site. Residues lysine 264, lysine 326, and lysine 334 each carry the N6-acetyllysine modification. Position 404 (arginine 404) interacts with ATP. An N6-acetyllysine mark is found at lysine 426, lysine 433, and lysine 468. Residue threonine 496 is modified to Phosphothreonine. Residue serine 570 is modified to Phosphoserine.

Belongs to the heat shock protein 90 family. Binds to the intracellular domain of tumor necrosis factor type 1 receptor. Binds to RB1. Interacts with SRC. Interacts with SDHA.

The protein localises to the mitochondrion. Its subcellular location is the mitochondrion inner membrane. The protein resides in the mitochondrion matrix. Its function is as follows. Chaperone that expresses an ATPase activity. Involved in maintaining mitochondrial function and polarization, downstream of PINK1 and mitochondrial complex I. Is a negative regulator of mitochondrial respiration able to modulate the balance between oxidative phosphorylation and aerobic glycolysis. The impact of TRAP1 on mitochondrial respiration is probably mediated by modulation of mitochondrial SRC and inhibition of SDHA. The chain is Heat shock protein 75 kDa, mitochondrial (Trap1) from Rattus norvegicus (Rat).